We begin with the raw amino-acid sequence, 78 residues long: Apolipoprotein C-I (78 aa).

An N-terminal signal peptide occupies residues 1-26; the sequence is MRLILCLPVLVVVLLMVLEGPAPAQG.

This sequence belongs to the apolipoprotein C1 family.

It is found in the secreted. Functionally, inhibitor of lipoprotein binding to the low density lipoprotein (LDL) receptor, LDL receptor-related protein, and very low density lipoprotein (VLDL) receptor. Associates with high density lipoproteins (HDL) and the triacylglycerol-rich lipoproteins in the plasma and makes up about 10% of the protein of the VLDL and 2% of that of HDL. Appears to interfere directly with fatty acid uptake and is also the major plasma inhibitor of cholesteryl ester transfer protein (CETP). Binds free fatty acids and reduces their intracellular esterification. Modulates the interaction of APOE with beta-migrating VLDL and inhibits binding of beta-VLDL to the LDL receptor-related protein. This chain is Apolipoprotein C-I (APOC1), found in Acinonyx jubatus (Cheetah).